Reading from the N-terminus, the 172-residue chain is Transcriptional activator protein (172 aa).

The Nuclear localization signal motif lies at 56-71 (KAQHRIAKHKAIRRRR). Residues 76 to 93 (CGCSIFYHIKCADHGFTH) fold into a zinc finger. Positions 119-172 (DHAGGRSSIHTDKDIPHPNQVQSQPQESTGSPQSIPELPSLDDIDSSFWDDIFK) are disordered. Polar residues predominate over residues 137-152 (NQVQSQPQESTGSPQS). A transactivation region spans residues 158 to 172 (SLDDIDSSFWDDIFK).

It belongs to the geminiviridae transcriptional activator protein family. As to quaternary structure, monomer. Homodimer. Homooligomer. Self-interaction correlates with nuclear localization and efficient activation of transcription. Monomers suppress local silencing by interacting with and inactivating host adenosine kinase 2 (ADK2) in the cytoplasm. Interacts with and inhibits host SNF1 kinase. Binds to ssDNA. In terms of processing, phosphorylated.

Its subcellular location is the host nucleus. It localises to the host cytoplasm. In terms of biological role, strong activator of the late viral genes promoters. Enhances the expression of the capsid protein and nuclear shuttle protein. Acts as a suppressor of RNA-mediated gene silencing, also known as post-transcriptional gene silencing (PTGS), a mechanism of plant viral defense that limits the accumulation of viral RNAs. Suppresses the host RNA silencing by inhibiting adenosine kinase 2 (ADK2), a kinase involved in a general methylation pathway. Also suppresses the host basal defense by interacting with and inhibiting SNF1 kinase, a key regulator of cell metabolism implicated in innate antiviral defense. Determines pathogenicity. This Bean golden yellow mosaic virus (isolate Puerto Rico) (BGYMV) protein is Transcriptional activator protein.